Here is a 360-residue protein sequence, read N- to C-terminus: Mannose-1-phosphate guanylyltransferase catalytic subunit beta (360 aa).

Positions 2-222 (KALILVGGYG…QGFWMDIGQP (221 aa)) are substrate-binding domain. D110 provides a ligand contact to GDP-alpha-D-mannose. D110 is a binding site for Mg(2+). K162 is an active-site residue. A GDP-alpha-D-mannose-binding site is contributed by D218. Residue D218 participates in Mg(2+) binding. The hexapeptide repeat domain stretch occupies residues 245-360 (CSGPGIVGNV…ESVPEPRIIM (116 aa)).

It belongs to the transferase hexapeptide repeat family. As to quaternary structure, component of the GMPPA-GMPPB mannose-1-phosphate guanylyltransferase complex composed of 4 GMPPA subunits and 8 GMPPB subunits; the complex is organized into three layers, a central layer made up of 2 GMPPA dimers sandwiched between two layers each made up of 2 GMPPB dimers. GMPPB catalytic activity is reduced when part of the complex and binding of GDP-alpha-D-Mannose by GMPPA induces allosteric feedback inhibition of GMPPB. It depends on Mg(2+) as a cofactor. In terms of tissue distribution, ubiquitously expressed, including in brain and skeletal muscle. Weakly expressed with highest expression in skeletal muscle, brain and gonads.

The protein localises to the cytoplasm. It carries out the reaction alpha-D-mannose 1-phosphate + GTP + H(+) = GDP-alpha-D-mannose + diphosphate. It participates in nucleotide-sugar biosynthesis; GDP-alpha-D-mannose biosynthesis; GDP-alpha-D-mannose from alpha-D-mannose 1-phosphate (GTP route): step 1/1. With respect to regulation, enzyme activity is reduced by incorporation into the GMPPA-GMPPB mannose-1-phosphate guanylyltransferase complex. Allosterically inhibited, when part of the GMPPA-GMPPB complex, by GDP-alpha-D-mannose binding to GMPPA. Its function is as follows. Catalytic subunit of the GMPPA-GMPPB mannose-1-phosphate guanylyltransferase complex. Catalyzes the formation of GDP-mannose, an essential precursor of glycan moieties of glycoproteins and glycolipids. Can catalyze the reverse reaction in vitro. Together with GMPPA regulates GDP-alpha-D-mannose levels. This Homo sapiens (Human) protein is Mannose-1-phosphate guanylyltransferase catalytic subunit beta.